We begin with the raw amino-acid sequence, 364 residues long: DNA replication and repair protein RecF (364 aa).

Residue 30-37 (GENAQGKT) coordinates ATP.

The protein belongs to the RecF family.

It localises to the cytoplasm. Functionally, the RecF protein is involved in DNA metabolism; it is required for DNA replication and normal SOS inducibility. RecF binds preferentially to single-stranded, linear DNA. It also seems to bind ATP. The polypeptide is DNA replication and repair protein RecF (Streptococcus suis (strain 98HAH33)).